A 622-amino-acid polypeptide reads, in one-letter code: Histone-arginine methyltransferase CARMER (622 aa).

The region spanning 118-425 is the SAM-dependent MTase PRMT-type domain; it reads ASQYFQFYGY…QRQSYDVEID (308 aa). Residues Gln-131, Arg-140, Gly-164, Glu-186, Glu-215, and Thr-243 each coordinate S-adenosyl-L-methionine. Asymmetric dimethylarginine; by autocatalysis is present on Arg-478. 2 disordered regions span residues 513 to 556 and 602 to 622; these read ANGG…QQQQ and QPILNSHHHHPGQPIHGNQFY. Positions 536 to 556 are enriched in low complexity; the sequence is QQQQQQQQQQQQAAVGPQQQQ.

This sequence belongs to the class I-like SAM-binding methyltransferase superfamily. Protein arginine N-methyltransferase family. Homodimer. Post-translationally, the dimethylated protein is the major form.

It localises to the cytoplasm. Its subcellular location is the nucleus. The enzyme catalyses L-arginyl-[protein] + 2 S-adenosyl-L-methionine = N(omega),N(omega)-dimethyl-L-arginyl-[protein] + 2 S-adenosyl-L-homocysteine + 2 H(+). Functionally, methylates (mono- and asymmetric dimethylation) the guanidino nitrogens of arginyl residues in proteins. May methylate histone H3 at 'Arg-17' and activate transcription via chromatin remodeling. The sequence is that of Histone-arginine methyltransferase CARMER from Anopheles gambiae (African malaria mosquito).